The chain runs to 258 residues: Synaptosomal-associated protein 29 (258 aa).

Positions 1-41 (MSAYPKSYNPFDDDGEDEGARPAPWRDARDLPDGPDAPADR) are disordered. Over residues 18-32 (EGARPAPWRDARDLP) the composition is skewed to basic and acidic residues. A coiled-coil region spans residues 76 to 107 (ASSEELARQRGVLERTEKMVDKMDQDLKISQK). 3 positions are modified to phosphoserine: S77, S78, and S114. The tract at residues 127-190 (PVETPPEQNG…GSAVSTDAYP (64 aa)) is disordered. Phosphothreonine is present on residues T130 and T137. The span at 132–144 (PEQNGTLASQPNS) shows a compositional bias: polar residues. Phosphoserine is present on residues S163, S182, S185, S204, and S210. The t-SNARE coiled-coil homology domain maps to 196 to 258 (QAYHQKIDSN…KSTERKVRQL (63 aa)).

The protein belongs to the SNAP-25 family. Forms a SNARE complex, composed of VAMP8, SNAP29 and STX17, involved in fusion of autophagosome with lysosome. Interacts with multiple syntaxins including STX6. Interacts with EIPR1. Interacts with STX17; this interaction is increased in the absence of TMEM39A.

The protein localises to the cytoplasm. The protein resides in the golgi apparatus membrane. Its subcellular location is the cytoplasmic vesicle. It is found in the autophagosome membrane. It localises to the cell projection. The protein localises to the cilium membrane. SNAREs, soluble N-ethylmaleimide-sensitive factor-attachment protein receptors, are essential proteins for fusion of cellular membranes. SNAREs localized on opposing membranes assemble to form a trans-SNARE complex, an extended, parallel four alpha-helical bundle that drives membrane fusion. SNAP29 is a SNARE involved in autophagy through the direct control of autophagosome membrane fusion with the lysososome membrane. Also plays a role in ciliogenesis by regulating membrane fusions. The chain is Synaptosomal-associated protein 29 from Pongo abelii (Sumatran orangutan).